We begin with the raw amino-acid sequence, 262 residues long: Dihydroorotate dehydrogenase B (NAD(+)), electron transfer subunit (262 aa).

An FAD-binding FR-type domain is found at 3–104 (KLQEMMTIVS…MGPLGNGFPV (102 aa)). FAD is bound by residues 53–56 (RPIS), 70–72 (LYR), and 79–80 (GT). Residues cysteine 226, cysteine 231, cysteine 234, and cysteine 249 each coordinate [2Fe-2S] cluster.

It belongs to the PyrK family. Heterotetramer of 2 PyrK and 2 PyrD type B subunits. It depends on [2Fe-2S] cluster as a cofactor. FAD is required as a cofactor.

It participates in pyrimidine metabolism; UMP biosynthesis via de novo pathway; orotate from (S)-dihydroorotate (NAD(+) route): step 1/1. Its function is as follows. Responsible for channeling the electrons from the oxidation of dihydroorotate from the FMN redox center in the PyrD type B subunit to the ultimate electron acceptor NAD(+). The polypeptide is Dihydroorotate dehydrogenase B (NAD(+)), electron transfer subunit (Lactococcus lactis subsp. lactis (strain IL1403) (Streptococcus lactis)).